Here is a 200-residue protein sequence, read N- to C-terminus: Small ribosomal subunit protein uS4 (200 aa).

The interval 22 to 42 is disordered; the sequence is TGKELEKRPYAPGPHGPGQRK. Residues 92 to 155 enclose the S4 RNA-binding domain; it reads ARLDNVVYKL…RNLSIIKESV (64 aa).

Belongs to the universal ribosomal protein uS4 family. As to quaternary structure, part of the 30S ribosomal subunit. Contacts protein S5. The interaction surface between S4 and S5 is involved in control of translational fidelity.

Its function is as follows. One of the primary rRNA binding proteins, it binds directly to 16S rRNA where it nucleates assembly of the body of the 30S subunit. With S5 and S12 plays an important role in translational accuracy. This is Small ribosomal subunit protein uS4 from Bacillus velezensis (strain DSM 23117 / BGSC 10A6 / LMG 26770 / FZB42) (Bacillus amyloliquefaciens subsp. plantarum).